A 596-amino-acid chain; its full sequence is Putative terpene synthase 2, chloroplastic (596 aa).

The transit peptide at 1–46 (MATLSMQVSTLSKQVKNLNTFGMGSASKLPMVARRVSTTRLRPICS) directs the protein to the chloroplast. Residues D349 and D353 each contribute to the Mn(2+) site. A DDXXD motif motif is present at residues 349–353 (DDVYD). 2 homodimerization regions span residues 355–361 (YGTLDEL) and 427–464 (EAKW…FTLP). Mn(2+)-binding residues include D493 and E501.

This sequence belongs to the terpene synthase family. Homodimer. Mn(2+) serves as cofactor. Mg(2+) is required as a cofactor.

It localises to the plastid. Its subcellular location is the chloroplast. It functions in the pathway secondary metabolite biosynthesis; terpenoid biosynthesis. In terms of biological role, putative monoterpene synthase inactive on geranyl diphosphate (GPP). The chain is Putative terpene synthase 2, chloroplastic from Thymus vulgaris (Thyme).